Consider the following 250-residue polypeptide: 2-(R)-hydroxypropyl-CoM dehydrogenase (250 aa).

NAD(+) is bound by residues Ser-12–Asn-14, Asp-33, Asp-60–Val-61, and Asn-87. Arg-152 is a 2-oxopropyl-coenzyme M binding site. The active-site Proton acceptor is Tyr-155. Residue Ile-188–Met-192 coordinates NAD(+). Trp-195 to Arg-196 contributes to the 2-oxopropyl-coenzyme M binding site.

Belongs to the short-chain dehydrogenases/reductases (SDR) family. Homodimer in solution. Homotetramer. Component III of the aliphatic epoxide carboxylation complex together with components I, II and IV.

It carries out the reaction (R)-2-hydroxypropyl-coenzyme M + NAD(+) = 2-oxopropyl-coenzyme M + NADH + H(+). Its pathway is alkene metabolism; propylene degradation. Inhibited by the arginine-specific modifiers 2,3-butanedione and phenylglyoxal. 2-(2-methyl-2-hydroxypropylthio)ethanesulfonate (M-HPC), an achiral analog of both R-HPC and S-HPC, and (2S)-2-hydroxypropyl-coenzyme M (S-HPC) are competitive inhibitors. Inhibited (at 70%) by the coenzyme M analog 2-bromoethanesulfonate (BES). Involved in aliphatic epoxide carboxylation. Catalyzes the reversible oxidation of (R)-2-hydroxypropyl-coenzyme M (R-HPC) to 2-oxopropyl-coenzyme M (2-KPC). The enzyme is highly specific for the R enantiomers. In vitro can also use achiral 2-propanol and short-chain (R)- and (S)-2-alkanols. This Xanthobacter autotrophicus (strain ATCC BAA-1158 / Py2) protein is 2-(R)-hydroxypropyl-CoM dehydrogenase.